The primary structure comprises 848 residues: Translation initiation factor IF-2 (848 aa).

The tract at residues 90-253 is disordered; sequence RTYIKRAELQ…PKEKRHAFER (164 aa). Residues 105 to 170 show a composition bias toward low complexity; the sequence is EAPAPEEPVQ…SAEPAIAPED (66 aa). 2 stretches are compositionally biased toward basic residues: residues 204 to 215 and 236 to 248; these read PKKKQAGHRGPR and KPLR…KEKR. Positions 344–511 constitute a tr-type G domain; the sequence is KRAPVVSVMG…AVLLQAEILE (168 aa). Residues 353–360 are G1; it reads GHVDHGKT. 353–360 serves as a coordination point for GTP; the sequence is GHVDHGKT. Residues 378-382 form a G2 region; the sequence is GITQH. The segment at 399–402 is G3; it reads DTPG. Residues 399-403 and 453-456 contribute to the GTP site; these read DTPGH and NKMD. A G4 region spans residues 453–456; the sequence is NKMD. Residues 489 to 491 form a G5 region; sequence SAH.

The protein belongs to the TRAFAC class translation factor GTPase superfamily. Classic translation factor GTPase family. IF-2 subfamily.

It localises to the cytoplasm. Its function is as follows. One of the essential components for the initiation of protein synthesis. Protects formylmethionyl-tRNA from spontaneous hydrolysis and promotes its binding to the 30S ribosomal subunits. Also involved in the hydrolysis of GTP during the formation of the 70S ribosomal complex. This chain is Translation initiation factor IF-2, found in Marinobacter nauticus (strain ATCC 700491 / DSM 11845 / VT8) (Marinobacter aquaeolei).